Consider the following 203-residue polypeptide: Peptidyl-tRNA hydrolase (203 aa).

Residue Y14 coordinates tRNA. The active-site Proton acceptor is the H19. The tRNA site is built by Y64, N66, and N112.

Belongs to the PTH family. As to quaternary structure, monomer.

It localises to the cytoplasm. The catalysed reaction is an N-acyl-L-alpha-aminoacyl-tRNA + H2O = an N-acyl-L-amino acid + a tRNA + H(+). Its function is as follows. Hydrolyzes ribosome-free peptidyl-tRNAs (with 1 or more amino acids incorporated), which drop off the ribosome during protein synthesis, or as a result of ribosome stalling. Functionally, catalyzes the release of premature peptidyl moieties from peptidyl-tRNA molecules trapped in stalled 50S ribosomal subunits, and thus maintains levels of free tRNAs and 50S ribosomes. In Methylobacterium sp. (strain 4-46), this protein is Peptidyl-tRNA hydrolase.